We begin with the raw amino-acid sequence, 556 residues long: Guard cell S-type anion channel SLAC1 (556 aa).

Residues 1–103 (MERKQSNAHS…GIINGGDGRK (103 aa)) form a disordered region. The Cytoplasmic segment spans residues 1–189 (MERKQSNAHS…EQWPFLLRFP (189 aa)). A coiled-coil region spans residues 10 to 36 (STFADINEVEDEAEQELQQQENNNNKR). Positions 25-34 (ELQQQENNNN) are enriched in low complexity. Ser59 bears the Phosphoserine; by SRK2E mark. Positions 69 to 79 (RESRERDDKKS) are enriched in basic and acidic residues. Phosphoserine; by SRK2E is present on residues Ser86, Ser113, and Ser120. A compositionally biased stretch (gly residues) spans 86-99 (SFGGFESGGIINGG). Residue Ser146 is modified to Phosphoserine. Residues 190–210 (IGCFGICLGLSSQAVLWLALA) traverse the membrane as a helical segment. The Extracellular segment spans residues 211–216 (KSPATN). A helical transmembrane segment spans residues 217–237 (FLHITPLINLVVWLFSLVVLV). The Cytoplasmic segment spans residues 238-265 (SVSFTYILKCIFYFEAVKREYFHPVRVN). Residues 266 to 286 (FFFAPWVVCMFLAISVPPMFS) form a helical membrane-spanning segment. The Extracellular portion of the chain corresponds to 287-295 (PNRKYLHPA). A helical transmembrane segment spans residues 296–316 (IWCVFMGPYFFLELKIYGQWL). Residues 317 to 325 (SGGKRRLCK) lie on the Cytoplasmic side of the membrane. The helical transmembrane segment at 326-346 (VANPSSHLSVVGNFVGAILAS) threads the bilayer. Topologically, residues 347–352 (KVGWDE) are extracellular. Residues 353–373 (VAKFLWAVGFAHYLVVFVTLY) traverse the membrane as a helical segment. At 374 to 388 (QRLPTSEALPKELHP) the chain is on the cytoplasmic side. The chain crosses the membrane as a helical span at residues 389–409 (VYSMFIAAPSAASIAWNTIYG). Topologically, residues 410-418 (QFDGCSRTC) are extracellular. A helical membrane pass occupies residues 419 to 439 (FFIALFLYISLVARINFFTGF). Residue Lys440 is a topological domain, cytoplasmic. Residues 441–463 (FSVAWWSYTFPMTTASVATIKYA) form a helical membrane-spanning segment. Residues 464 to 479 (EAVPGYPSRALALTLS) lie on the Extracellular side of the membrane. Residues 480–500 (FISTAMVCVLFVSTLLHAFVW) form a helical membrane-spanning segment. The Cytoplasmic segment spans residues 501–556 (QTLFPNDLAIAITKRKLTREKKPFKRAYDLKRWTKQALAKKISAEKDFEAEEESHH).

The protein belongs to the SLAC1 S-type anion channel family. Homotrimer. Interacts with SRK2E, CPK6, CPK21, CPK23 and PP2CA. The channel is inactivated upon PP2CA and ABI1 binding. Interacts with KAT1, KAT2, KAT3/KC1 and AKT2. Interacts with GHR1. Phosphorylation by SRK2E, especially on Ser-120, activates the channel. Also phosphorylated and activated by CPK21 and CPK23. Abscisic acid (ABA) promotes phosphorylation. This phosphorylation is inhibited by ABI1. Phosphorylated and activated by GHR1; this phosphorylation is repressed by ABI2 but not ABI1. Phosphorylated by HT1 on N-terminus but not C-terminus. Preferentially expressed in guard cells. Also detected in the vascular strands close to the leaf margins.

It localises to the cell membrane. With respect to regulation, activated by GHR1-mediated phosphorylation which is negatively regulated by ABI2 but not ABI1. Activation by SRK2E/OST1 and GHR1 is repressed by HT1. In terms of biological role, slow, weak voltage-dependent S-type anion efflux channel involved in maintenance of anion homeostasis. Cl(-) efflux through SLAC1 causes membrane depolarization, which activates outward-rectifying K1 channels, leading to KCl and water efflux to reduce turgor further and cause stomatal closure, that reduces water loss and promotes leaf turgor. Essential for stomatal closure in response to CO(2), abscisic acid (ABA), ozone O(3), light/dark transitions, humidity change, calcium ions, hydrogen peroxide H(2)O(2), reactive oxygen species (ROS), and nitric oxide. Binds to the highly selective inward-rectifying potassium channels KAT1 and AKT2, and inhibits their activities. Functions as an essential negative regulator of inward potassium channels in guard cells. Essential for the efficient stomatal closure and opening in guard cells. Involved in the local and/or systemic stomatal responses (e.g. stomatal closure) to light stress. This is Guard cell S-type anion channel SLAC1 from Arabidopsis thaliana (Mouse-ear cress).